A 242-amino-acid polypeptide reads, in one-letter code: UPF0246 protein SPCG_1533 (242 aa).

It belongs to the UPF0246 family.

This chain is UPF0246 protein SPCG_1533, found in Streptococcus pneumoniae (strain CGSP14).